The following is a 530-amino-acid chain: UDP-glucuronosyltransferase 1A10 (530 aa).

An N-terminal signal peptide occupies residues methionine 1 to alanine 25. N-linked (GlcNAc...) asparagine glycosylation is found at asparagine 71, asparagine 292, and asparagine 344. The helical transmembrane segment at valine 488–phenylalanine 504 threads the bilayer.

This sequence belongs to the UDP-glycosyltransferase family. In terms of assembly, homodimer. Homooligomer. Interacts with UGT1A1, UGT1A3, UGT1A4, UGT1A6, UGT1A7, UGT1A8 and UGT1A9 to form heterodimers. Isoform 1 interacts with isoform 2/i2 suggesting that oligomerization is involved in negative regulation of transferase activity by isoform 2. Isoform 1 also interacts with respective i2 isoforms of UGT1A1, UGT1A3, UGT1A4, UGT1A6, UGT1A7, UGT1A8 and UGT1A9. As to expression, liver and colon. Isoform 1 and isoform 2 are expressed in colon, esophagus and small intestine; isoform 2 but not isoform 1 is expressed in liver or kidney.

It is found in the endoplasmic reticulum membrane. It carries out the reaction glucuronate acceptor + UDP-alpha-D-glucuronate = acceptor beta-D-glucuronoside + UDP + H(+). It catalyses the reaction 17beta-estradiol + UDP-alpha-D-glucuronate = 17beta-estradiol 3-O-(beta-D-glucuronate) + UDP + H(+). The enzyme catalyses 17beta-estradiol + UDP-alpha-D-glucuronate = 17beta-estradiol 17-O-(beta-D-glucuronate) + UDP + H(+). The catalysed reaction is 17alpha-estradiol + UDP-alpha-D-glucuronate = 17alpha-estradiol 3-O-(beta-D-glucuronate) + UDP + H(+). It carries out the reaction 16alpha,17beta-estriol + UDP-alpha-D-glucuronate = 16alpha,17beta-estriol 3-O-(beta-D-glucuronate) + UDP + H(+). It catalyses the reaction 16beta,17beta-estriol + UDP-alpha-D-glucuronate = 16beta,17beta-estriol 3-O-(beta-D-glucuronate) + UDP + H(+). The enzyme catalyses 16alpha,17alpha-estriol + UDP-alpha-D-glucuronate = 16alpha,17alpha-estriol 3-O-(beta-D-glucuronate) + UDP + H(+). The catalysed reaction is 16alpha-hydroxyestrone + UDP-alpha-D-glucuronate = 16alpha-hydroxyestrone 3-O-(beta-D-glucuronate) + UDP + H(+). It carries out the reaction estrone + UDP-alpha-D-glucuronate = estrone 3-O-(beta-D-glucuronate) + UDP + H(+). It catalyses the reaction prunetin + UDP-alpha-D-glucuronate = prunetin-4'-O-beta-D-glucuronide + UDP. The enzyme catalyses (5Z,8Z,11Z,14Z)-eicosatetraenoate + UDP-alpha-D-glucuronate = O-[(5Z),(8Z),(11Z),(14Z)-eicosatetraenoyl]-beta-D-glucuronate + UDP. The catalysed reaction is 15-hydroxy-(5Z,8Z,11Z,13E)-eicosatetraenoate + UDP-alpha-D-glucuronate = 15-O-(beta-D-glucuronosyl)-(5Z,8Z,11Z,14Z)-eicosatetraenoate + UDP + H(+). It carries out the reaction prostaglandin B1 + UDP-alpha-D-glucuronate = 15-O-(beta-D-glucuronosyl)-prostaglandin B1 + UDP + H(+). It catalyses the reaction (E)-ferulate + UDP-alpha-D-glucuronate = (E)-4-O-(beta-D-glucuronosyl)-ferulate + UDP + H(+). The enzyme catalyses (E)-ferulate + UDP-alpha-D-glucuronate = (E)-ferulic acid beta-D-glucuronate ester + UDP. The catalysed reaction is losartan + UDP-alpha-D-glucuronate = losartan-2-N-beta-D-glucuronide + UDP. It carries out the reaction candesartan + UDP-alpha-D-glucuronate = candesartan O-beta-D-glucuronoside + UDP. It catalyses the reaction candesartan + UDP-alpha-D-glucuronate = candesartan-2-N-beta-D-glucuronide + UDP. The enzyme catalyses zolasartan + UDP-alpha-D-glucuronate = zolarsartan-1-N-beta-D-glucuronide + UDP. In terms of biological role, UDP-glucuronosyltransferase (UGT) that catalyzes phase II biotransformation reactions in which lipophilic substrates are conjugated with glucuronic acid to increase the metabolite's water solubility, thereby facilitating excretion into either the urine or bile. Essential for the elimination and detoxification of drugs, xenobiotics and endogenous compounds. Catalyzes the glucuronidation of endogenous estrogen hormones such as estradiol, estrone and estriol. Involved in the glucuronidation of arachidonic acid (AA) and AA-derived eicosanoids including 15-HETE and PGB1. Involved in the glucuronidation of the phytochemical ferulic acid at the phenolic or the carboxylic acid group. Also catalyzes the glucuronidation of the isoflavones genistein, daidzein, glycitein, formononetin, biochanin A and prunetin, which are phytoestrogens with anticancer and cardiovascular properties. Involved in the glucuronidation of the AGTR1 angiotensin receptor antagonist losartan, caderastan and zolarsatan, drugs which can inhibit the effect of angiotensin II. Lacks UGT glucuronidation activity but acts as a negative regulator of isoform 1. The sequence is that of UDP-glucuronosyltransferase 1A10 from Homo sapiens (Human).